The primary structure comprises 133 residues: MAEWHKIIEDISKNNKFEDAAIVDYKTTKNVLAAIPNRTFAKINPGEVIPLITNHNILKPLIGQKFCIVYTNSLMDENTYAMELLTGYAPVSPIVIARTHTALIFLMGKPTTSRRDVYRTCRDHATRVRATGN.

This sequence belongs to the profilin family.

Functionally, more likely to influence phosphoinositide metabolism than actin assembly. The protein is Profilin of Cowpox virus (strain GRI-90 / Grishak) (CPV).